We begin with the raw amino-acid sequence, 263 residues long: UPF0328 protein ECU08_2060 (263 aa).

Belongs to the UPF0328 family.

The sequence is that of UPF0328 protein ECU08_2060 from Encephalitozoon cuniculi (strain GB-M1) (Microsporidian parasite).